The sequence spans 154 residues: Large ribosomal subunit protein uL13 (154 aa).

The protein belongs to the universal ribosomal protein uL13 family. In terms of assembly, part of the 50S ribosomal subunit.

Its function is as follows. This protein is one of the early assembly proteins of the 50S ribosomal subunit, although it is not seen to bind rRNA by itself. It is important during the early stages of 50S assembly. In Bradyrhizobium sp. (strain BTAi1 / ATCC BAA-1182), this protein is Large ribosomal subunit protein uL13.